A 443-amino-acid chain; its full sequence is Phosphoglucosamine mutase (443 aa).

Ser101 serves as the catalytic Phosphoserine intermediate. Residues Ser101, Asp239, Asp241, and Asp243 each contribute to the Mg(2+) site. Ser101 is modified (phosphoserine).

It belongs to the phosphohexose mutase family. Requires Mg(2+) as cofactor. Post-translationally, activated by phosphorylation.

The catalysed reaction is alpha-D-glucosamine 1-phosphate = D-glucosamine 6-phosphate. Catalyzes the conversion of glucosamine-6-phosphate to glucosamine-1-phosphate. The sequence is that of Phosphoglucosamine mutase from Francisella tularensis subsp. holarctica (strain FTNF002-00 / FTA).